Here is a 249-residue protein sequence, read N- to C-terminus: tRNA pseudouridine synthase A (249 aa).

Residue aspartate 52 is the Nucleophile of the active site. Tyrosine 110 provides a ligand contact to substrate.

The protein belongs to the tRNA pseudouridine synthase TruA family. Homodimer.

The catalysed reaction is uridine(38/39/40) in tRNA = pseudouridine(38/39/40) in tRNA. Its function is as follows. Formation of pseudouridine at positions 38, 39 and 40 in the anticodon stem and loop of transfer RNAs. This chain is tRNA pseudouridine synthase A, found in Exiguobacterium sibiricum (strain DSM 17290 / CCUG 55495 / CIP 109462 / JCM 13490 / 255-15).